The chain runs to 189 residues: MQYLIVLALVAAASANVYHDGACPEVKPVDNFDWSNYHGKWWEVAKYPNSVEKYGKCGWAEYTPEGKSVKVSNYHVIHGKEYFIEGTAYPVGDSKIGKIYHKLTYGGVTKENVFNVLSTDNKNYIIGYYCKYDEDKKGHQDFVWVLSRSKVLTGEAKTAVENYLIGSPVVDSQKLVYSDFSEAACKVNN.

Residues 1-15 (MQYLIVLALVAAASA) form the signal peptide. Intrachain disulfides connect Cys23–Cys130 and Cys57–Cys185.

Belongs to the calycin superfamily. Lipocalin family. As to quaternary structure, homotetramer. Hemolymph.

It localises to the secreted. Its function is as follows. This protein binds the blue pigments bilins. In Pieris brassicae (White butterfly), this protein is Bilin-binding protein.